The following is a 327-amino-acid chain: MASMAAAIAASRSAVMSGNRPLDDRERKRFTYFSSLSPMARKIMQDKEKIREKYGPEWARLPPAQQDEIIDRCLVGPRAPAPRDPGDSEELTRFPGLRGPTGQKVVRFGDEDLTWQDEHSAPFSWETKSQMEFSISALSIQEPSNGTAASEPRPLSKASQGSQALKSSQGSRSSSLDALGPTRKEEEASFWKINAERSRGEGPEAEFQSLTPSQIKSMEKGEKVLPPCYRQEPAPKDREAKVERPSTLRQEQRPLPNVSTERERPQPVQAFSSALHEAAPSQLEGKLPSPDVRQDDGEDTLFSEPKFAQVSSSNVVLKTGFDFLDNW.

The segment covering 1–17 (MASMAAAIAASRSAVMS) has biased composition (low complexity). The segment at 1–22 (MASMAAAIAASRSAVMSGNRPL) is disordered. An N-acetylalanine modification is found at Ala2. Ser37 bears the Phosphoserine mark. The tract at residues 76 to 113 (GPRAPAPRDPGDSEELTRFPGLRGPTGQKVVRFGDEDL) is disordered. Phosphoserine is present on Ser129. Positions 134–148 (SISALSIQEPSNGTA) are enriched in polar residues. The disordered stretch occupies residues 134–299 (SISALSIQEP…PDVRQDDGED (166 aa)). The segment covering 162–176 (SQALKSSQGSRSSSL) has biased composition (low complexity). Ser175 is subject to Phosphoserine. Composition is skewed to basic and acidic residues over residues 182–202 (TRKE…RGEG) and 233–252 (PAPK…RQEQ). Ser289 is subject to Phosphoserine.

It is found in the cytoplasm. This is an uncharacterized protein from Homo sapiens (Human).